The following is a 1403-amino-acid chain: DNA-directed RNA polymerase subunit beta' (1403 aa).

4 residues coordinate Zn(2+): Cys-71, Cys-73, Cys-86, and Cys-89. Residues Asp-462, Asp-464, and Asp-466 each coordinate Mg(2+). Positions 811, 885, 892, and 895 each coordinate Zn(2+).

This sequence belongs to the RNA polymerase beta' chain family. In terms of assembly, the RNAP catalytic core consists of 2 alpha, 1 beta, 1 beta' and 1 omega subunit. When a sigma factor is associated with the core the holoenzyme is formed, which can initiate transcription. Mg(2+) serves as cofactor. The cofactor is Zn(2+).

The catalysed reaction is RNA(n) + a ribonucleoside 5'-triphosphate = RNA(n+1) + diphosphate. Its function is as follows. DNA-dependent RNA polymerase catalyzes the transcription of DNA into RNA using the four ribonucleoside triphosphates as substrates. This chain is DNA-directed RNA polymerase subunit beta', found in Bartonella tribocorum (strain CIP 105476 / IBS 506).